Here is a 436-residue protein sequence, read N- to C-terminus: mRNA cap guanine-N(7) methyltransferase (436 aa).

The tract at residues 1–50 (MSTKPEKPIWMSQEDYDRQYGSITGDESSTVSKKDSKVTANAPGDGNGSL) is disordered. Residues 141–424 (SPIIKLRNFN…FYTMFAFRKV (284 aa)) form the mRNA cap 0 methyltransferase domain. 150–151 (NN) is a binding site for mRNA. K154, G172, D194, D223, Q249, and Y254 together coordinate S-adenosyl-L-methionine.

This sequence belongs to the class I-like SAM-binding methyltransferase superfamily. mRNA cap 0 methyltransferase family.

Its subcellular location is the nucleus. It carries out the reaction a 5'-end (5'-triphosphoguanosine)-ribonucleoside in mRNA + S-adenosyl-L-methionine = a 5'-end (N(7)-methyl 5'-triphosphoguanosine)-ribonucleoside in mRNA + S-adenosyl-L-homocysteine. Its function is as follows. Responsible for methylating the 5'-cap structure of mRNAs. In Saccharomyces cerevisiae (strain ATCC 204508 / S288c) (Baker's yeast), this protein is mRNA cap guanine-N(7) methyltransferase (ABD1).